The sequence spans 66 residues: Large ribosomal subunit protein bL35 (66 aa).

Belongs to the bacterial ribosomal protein bL35 family.

In Leptospira biflexa serovar Patoc (strain Patoc 1 / Ames), this protein is Large ribosomal subunit protein bL35.